We begin with the raw amino-acid sequence, 158 residues long: Transcription elongation factor GreA (158 aa).

A coiled-coil region spans residues 4 to 75; sequence EKTYPMTQEG…TQLENMIRNA (72 aa).

Belongs to the GreA/GreB family.

In terms of biological role, necessary for efficient RNA polymerase transcription elongation past template-encoded arresting sites. The arresting sites in DNA have the property of trapping a certain fraction of elongating RNA polymerases that pass through, resulting in locked ternary complexes. Cleavage of the nascent transcript by cleavage factors such as GreA or GreB allows the resumption of elongation from the new 3'terminus. GreA releases sequences of 2 to 3 nucleotides. This chain is Transcription elongation factor GreA, found in Bacillus anthracis (strain A0248).